A 305-amino-acid polypeptide reads, in one-letter code: GTP cyclohydrolase FolE2 (305 aa).

It belongs to the GTP cyclohydrolase IV family.

It catalyses the reaction GTP + H2O = 7,8-dihydroneopterin 3'-triphosphate + formate + H(+). Its pathway is cofactor biosynthesis; 7,8-dihydroneopterin triphosphate biosynthesis; 7,8-dihydroneopterin triphosphate from GTP: step 1/1. In terms of biological role, converts GTP to 7,8-dihydroneopterin triphosphate. This Xanthomonas euvesicatoria pv. vesicatoria (strain 85-10) (Xanthomonas campestris pv. vesicatoria) protein is GTP cyclohydrolase FolE2.